Here is a 497-residue protein sequence, read N- to C-terminus: Guanosine-5'-triphosphate,3'-diphosphate pyrophosphatase (497 aa).

The protein belongs to the GppA/Ppx family. GppA subfamily.

The catalysed reaction is guanosine 3'-diphosphate 5'-triphosphate + H2O = guanosine 3',5'-bis(diphosphate) + phosphate + H(+). It functions in the pathway purine metabolism; ppGpp biosynthesis; ppGpp from GTP: step 2/2. In terms of biological role, catalyzes the conversion of pppGpp to ppGpp. Guanosine pentaphosphate (pppGpp) is a cytoplasmic signaling molecule which together with ppGpp controls the 'stringent response', an adaptive process that allows bacteria to respond to amino acid starvation, resulting in the coordinated regulation of numerous cellular activities. The polypeptide is Guanosine-5'-triphosphate,3'-diphosphate pyrophosphatase (Vibrio atlanticus (strain LGP32) (Vibrio splendidus (strain Mel32))).